Reading from the N-terminus, the 81-residue chain is Large ribosomal subunit protein bL31B (81 aa).

The protein belongs to the bacterial ribosomal protein bL31 family. Type B subfamily. In terms of assembly, part of the 50S ribosomal subunit.

This is Large ribosomal subunit protein bL31B from Bacillus cereus (strain ATCC 10987 / NRS 248).